A 236-amino-acid polypeptide reads, in one-letter code: 2-C-methyl-D-erythritol 4-phosphate cytidylyltransferase (236 aa).

Belongs to the IspD/TarI cytidylyltransferase family. IspD subfamily.

It carries out the reaction 2-C-methyl-D-erythritol 4-phosphate + CTP + H(+) = 4-CDP-2-C-methyl-D-erythritol + diphosphate. Its pathway is isoprenoid biosynthesis; isopentenyl diphosphate biosynthesis via DXP pathway; isopentenyl diphosphate from 1-deoxy-D-xylulose 5-phosphate: step 2/6. Catalyzes the formation of 4-diphosphocytidyl-2-C-methyl-D-erythritol from CTP and 2-C-methyl-D-erythritol 4-phosphate (MEP). In Pseudomonas savastanoi pv. phaseolicola (strain 1448A / Race 6) (Pseudomonas syringae pv. phaseolicola (strain 1448A / Race 6)), this protein is 2-C-methyl-D-erythritol 4-phosphate cytidylyltransferase.